We begin with the raw amino-acid sequence, 311 residues long: Acetyl-coenzyme A carboxylase carboxyl transferase subunit alpha (311 aa).

The region spanning 36 to 286 is the CoA carboxyltransferase C-terminal domain; the sequence is ELKKEVERVY…VNYFLKSLEE (251 aa).

Belongs to the AccA family. Acetyl-CoA carboxylase is a heterohexamer composed of biotin carboxyl carrier protein (AccB), biotin carboxylase (AccC) and two subunits each of ACCase subunit alpha (AccA) and ACCase subunit beta (AccD).

It localises to the cytoplasm. It carries out the reaction N(6)-carboxybiotinyl-L-lysyl-[protein] + acetyl-CoA = N(6)-biotinyl-L-lysyl-[protein] + malonyl-CoA. It functions in the pathway lipid metabolism; malonyl-CoA biosynthesis; malonyl-CoA from acetyl-CoA: step 1/1. Component of the acetyl coenzyme A carboxylase (ACC) complex. First, biotin carboxylase catalyzes the carboxylation of biotin on its carrier protein (BCCP) and then the CO(2) group is transferred by the carboxyltransferase to acetyl-CoA to form malonyl-CoA. This chain is Acetyl-coenzyme A carboxylase carboxyl transferase subunit alpha, found in Wolinella succinogenes (strain ATCC 29543 / DSM 1740 / CCUG 13145 / JCM 31913 / LMG 7466 / NCTC 11488 / FDC 602W) (Vibrio succinogenes).